A 601-amino-acid polypeptide reads, in one-letter code: NADPH--cytochrome P450 reductase (601 aa).

The Flavodoxin-like domain occupies 25–169 (IVVFYGSQTG…DFVTWREQFW (145 aa)). Residues 31-36 (SQTGTG), 83-86 (ATYG), 118-127 (LGDKTYEHYN), and aspartate 153 each bind FMN. An FAD-binding FR-type domain is found at 224–425 (KNPFLAPVTV…ICAVLVEYXT (202 aa)). Residues 399–402 (RYYS), 417–419 (CAV), tyrosine 423, and 427–430 (GVAT) contribute to the FAD site. Residues threonine 458, 519-520 (SR), 525-529 (KVYVQ), and aspartate 562 each bind NADP(+). Tryptophan 600 is a binding site for FAD.

This sequence belongs to the NADPH--cytochrome P450 reductase family. The protein in the N-terminal section; belongs to the flavodoxin family. In the C-terminal section; belongs to the flavoprotein pyridine nucleotide cytochrome reductase family. FAD serves as cofactor. FMN is required as a cofactor.

It localises to the endoplasmic reticulum membrane. The catalysed reaction is 2 oxidized [cytochrome P450] + NADPH = 2 reduced [cytochrome P450] + NADP(+) + H(+). In terms of biological role, this enzyme is required for electron transfer from NADP to cytochrome P450 in microsomes. It can also provide electron transfer to heme oxygenase and cytochrome B5. The polypeptide is NADPH--cytochrome P450 reductase (Salmo trutta (Brown trout)).